A 253-amino-acid chain; its full sequence is 5-oxoprolinase subunit A (253 aa).

It belongs to the LamB/PxpA family. Forms a complex composed of PxpA, PxpB and PxpC.

The enzyme catalyses 5-oxo-L-proline + ATP + 2 H2O = L-glutamate + ADP + phosphate + H(+). In terms of biological role, catalyzes the cleavage of 5-oxoproline to form L-glutamate coupled to the hydrolysis of ATP to ADP and inorganic phosphate. The chain is 5-oxoprolinase subunit A from Bacillus cereus (strain B4264).